Consider the following 161-residue polypeptide: Nucleotide-binding protein Bphy_0527 (161 aa).

The protein belongs to the YajQ family.

Nucleotide-binding protein. The chain is Nucleotide-binding protein Bphy_0527 from Paraburkholderia phymatum (strain DSM 17167 / CIP 108236 / LMG 21445 / STM815) (Burkholderia phymatum).